Consider the following 148-residue polypeptide: Cytochrome c oxidase subunit 6, mitochondrial (148 aa).

Residues 1-40 (MLSRAIFRNPVINRTLLRARPGAYHATRLTKNTFIQSRKY) constitute a mitochondrion transit peptide.

The protein belongs to the cytochrome c oxidase subunit 5A family. In terms of assembly, component of the cytochrome c oxidase (complex IV, CIV), a multisubunit enzyme composed of 12 subunits. The complex is composed of a catalytic core of 3 subunits COX1, COX2 and COX3, encoded in the mitochondrial DNA, and 9 supernumerary subunits COX4, COX5A (or COX5B), COX6, COX7, COX8, COX9, COX12, COX13 and COX26, which are encoded in the nuclear genome. The complex exists as a monomer or a dimer and forms supercomplexes (SCs) in the inner mitochondrial membrane with a dimer of ubiquinol-cytochrome c oxidoreductase (cytochrome b-c1 complex, complex III, CIII), resulting in 2 different assemblies (supercomplexes III(2)IV and III(2)IV(2)). COX26 interacts with COX1, COX2, COX6 and COX9.

The protein localises to the mitochondrion inner membrane. It functions in the pathway energy metabolism; oxidative phosphorylation. Its function is as follows. Component of the cytochrome c oxidase, the last enzyme in the mitochondrial electron transport chain which drives oxidative phosphorylation. The respiratory chain contains 3 multisubunit complexes succinate dehydrogenase (complex II, CII), ubiquinol-cytochrome c oxidoreductase (cytochrome b-c1 complex, complex III, CIII) and cytochrome c oxidase (complex IV, CIV), that cooperate to transfer electrons derived from NADH and succinate to molecular oxygen, creating an electrochemical gradient over the inner membrane that drives transmembrane transport and the ATP synthase. Cytochrome c oxidase is the component of the respiratory chain that catalyzes the reduction of oxygen to water. Electrons originating from reduced cytochrome c in the intermembrane space (IMS) are transferred via the dinuclear copper A center (CU(A)) of COX2 and heme A of COX1 to the active site in COX1, a binuclear center (BNC) formed by heme A3 and copper B (CU(B)). The BNC reduces molecular oxygen to 2 water molecules using 4 electrons from cytochrome c in the IMS and 4 protons from the mitochondrial matrix. COX6 may stabilize the region of CIV at the interface with CIII, supporting a role in formation or stability of the CIII(2)IV(2) SC. In Saccharomyces cerevisiae (strain ATCC 204508 / S288c) (Baker's yeast), this protein is Cytochrome c oxidase subunit 6, mitochondrial (COX6).